Consider the following 419-residue polypeptide: Sulfate adenylyltransferase (419 aa).

The protein belongs to the sulfate adenylyltransferase family.

The catalysed reaction is sulfate + ATP + H(+) = adenosine 5'-phosphosulfate + diphosphate. The protein operates within sulfur metabolism; hydrogen sulfide biosynthesis; sulfite from sulfate: step 1/3. This is Sulfate adenylyltransferase from Psychrobacter sp. (strain PRwf-1).